The sequence spans 119 residues: NAD(P)H-quinone oxidoreductase subunit M (119 aa).

This sequence belongs to the complex I NdhM subunit family. NDH-1 can be composed of about 15 different subunits; different subcomplexes with different compositions have been identified which probably have different functions.

The protein localises to the cell inner membrane. The catalysed reaction is a plastoquinone + NADH + (n+1) H(+)(in) = a plastoquinol + NAD(+) + n H(+)(out). The enzyme catalyses a plastoquinone + NADPH + (n+1) H(+)(in) = a plastoquinol + NADP(+) + n H(+)(out). Functionally, NDH-1 shuttles electrons from an unknown electron donor, via FMN and iron-sulfur (Fe-S) centers, to quinones in the respiratory and/or the photosynthetic chain. The immediate electron acceptor for the enzyme in this species is believed to be plastoquinone. Couples the redox reaction to proton translocation, and thus conserves the redox energy in a proton gradient. Cyanobacterial NDH-1 also plays a role in inorganic carbon-concentration. The chain is NAD(P)H-quinone oxidoreductase subunit M from Gloeobacter violaceus (strain ATCC 29082 / PCC 7421).